A 363-amino-acid chain; its full sequence is UDP-N-acetylglucosamine--N-acetylmuramyl-(pentapeptide) pyrophosphoryl-undecaprenol N-acetylglucosamine transferase (363 aa).

Residues 10 to 12, Asn-124, Ser-195, Ile-250, and Gln-295 contribute to the UDP-N-acetyl-alpha-D-glucosamine site; that span reads TGG.

The protein belongs to the glycosyltransferase 28 family. MurG subfamily.

The protein localises to the cell membrane. The enzyme catalyses di-trans,octa-cis-undecaprenyl diphospho-N-acetyl-alpha-D-muramoyl-L-alanyl-D-glutamyl-meso-2,6-diaminopimeloyl-D-alanyl-D-alanine + UDP-N-acetyl-alpha-D-glucosamine = di-trans,octa-cis-undecaprenyl diphospho-[N-acetyl-alpha-D-glucosaminyl-(1-&gt;4)]-N-acetyl-alpha-D-muramoyl-L-alanyl-D-glutamyl-meso-2,6-diaminopimeloyl-D-alanyl-D-alanine + UDP + H(+). It participates in cell wall biogenesis; peptidoglycan biosynthesis. In terms of biological role, cell wall formation. Catalyzes the transfer of a GlcNAc subunit on undecaprenyl-pyrophosphoryl-MurNAc-pentapeptide (lipid intermediate I) to form undecaprenyl-pyrophosphoryl-MurNAc-(pentapeptide)GlcNAc (lipid intermediate II). This chain is UDP-N-acetylglucosamine--N-acetylmuramyl-(pentapeptide) pyrophosphoryl-undecaprenol N-acetylglucosamine transferase, found in Listeria monocytogenes serovar 1/2a (strain ATCC BAA-679 / EGD-e).